The following is a 217-amino-acid chain: Adenylate kinase (217 aa).

Gly10–Thr15 is an ATP binding site. Residues Ser30–Val59 are NMP. AMP is bound by residues Thr31, Arg36, Gln57–Val59, Gly85–Arg88, and Gln92. An LID region spans residues Gly122–Asp159. ATP is bound by residues Arg123 and Ile132–Tyr133. AMP-binding residues include Arg156 and Arg167. Gly202 provides a ligand contact to ATP.

Belongs to the adenylate kinase family. As to quaternary structure, monomer.

The protein localises to the cytoplasm. The enzyme catalyses AMP + ATP = 2 ADP. The protein operates within purine metabolism; AMP biosynthesis via salvage pathway; AMP from ADP: step 1/1. Catalyzes the reversible transfer of the terminal phosphate group between ATP and AMP. Plays an important role in cellular energy homeostasis and in adenine nucleotide metabolism. The sequence is that of Adenylate kinase from Teredinibacter turnerae (strain ATCC 39867 / T7901).